Here is a 397-residue protein sequence, read N- to C-terminus: Probable inactive purple acid phosphatase 28 (397 aa).

Positions 1-30 (MNCSIGNWKHTVLYLTLIVSLLYFIESLIS) are cleaved as a signal peptide. N-linked (GlcNAc...) asparagine glycans are attached at residues asparagine 91 and asparagine 209. The Zn(2+) site is built by histidine 266 and histidine 314. 314 to 316 (HDH) serves as a coordination point for substrate. Position 316 (histidine 316) interacts with Fe cation.

It belongs to the metallophosphoesterase superfamily. Purple acid phosphatase family. As to quaternary structure, homodimer. Fe cation serves as cofactor. It depends on Zn(2+) as a cofactor. As to expression, expressed in roots, stems, leaves, flowers and siliques.

It is found in the secreted. The polypeptide is Probable inactive purple acid phosphatase 28 (PAP28) (Arabidopsis thaliana (Mouse-ear cress)).